Reading from the N-terminus, the 244-residue chain is High frequency lysogenization protein HflD homolog (244 aa).

It belongs to the HflD family.

The protein resides in the cytoplasm. The protein localises to the cell inner membrane. This Acinetobacter baumannii (strain SDF) protein is High frequency lysogenization protein HflD homolog.